A 416-amino-acid chain; its full sequence is Zinc finger protein 92 homolog (416 aa).

Residues 14–85 (VSFEDVSVYF…DIPRTWATAG (72 aa)) enclose the KRAB domain. Positions 86–125 (LHIGDRTQSKTSTSTQKHSGRQLPGADPQGGKEGQAARSS) are disordered. 8 consecutive C2H2-type zinc fingers follow at residues 152 to 174 (YLCQ…RIIH), 180 to 202 (YACP…QRIH), 208 to 230 (YACP…QVIH), 236 to 258 (FACG…ARVH), 264 to 286 (YACP…QRTH), 292 to 314 (YACG…QRSH), 320 to 342 (FACR…RRVH), and 348 to 370 (YECS…QAVH). The segment at 368-416 (AVHGARRPAKAETARRLAGPGSTGPGSAVAATSPPRPSTAARPSRPSRR) is disordered. The segment covering 394–416 (SAVAATSPPRPSTAARPSRPSRR) has biased composition (low complexity).

Belongs to the krueppel C2H2-type zinc-finger protein family.

The protein resides in the nucleus. In terms of biological role, KRAB domain-containing zinc-finger protein that represses B1/Alu SINE transposable elements and modulates the transcription of nearby genes in a tissue-specific manner. It regulates glucose homeostasis and lipid metabolism by modulating the expression of the endocrine cell-defining transcription factor, MAFB, in pancreatic islets and, the fat metabolism regulator, ACACB, in adipose tissue and muscle. This is Zinc finger protein 92 homolog (ZFP92) from Homo sapiens (Human).